Consider the following 261-residue polypeptide: Pimeloyl-[acyl-carrier protein] methyl ester esterase (261 aa).

Positions 16–241 constitute an AB hydrolase-1 domain; sequence LVLIHGWGMN…QASHAPFISH (226 aa). Residues tryptophan 22, 82–83, and 143–147 contribute to the substrate site; these read SL and FMTLQ. Serine 82 (nucleophile) is an active-site residue. Residues aspartate 207 and histidine 235 contribute to the active site. Position 235 (histidine 235) interacts with substrate.

Belongs to the AB hydrolase superfamily. Carboxylesterase BioH family. As to quaternary structure, monomer.

Its subcellular location is the cytoplasm. It carries out the reaction 6-carboxyhexanoyl-[ACP] methyl ester + H2O = 6-carboxyhexanoyl-[ACP] + methanol + H(+). It participates in cofactor biosynthesis; biotin biosynthesis. In terms of biological role, the physiological role of BioH is to remove the methyl group introduced by BioC when the pimeloyl moiety is complete. It allows to synthesize pimeloyl-ACP via the fatty acid synthetic pathway through the hydrolysis of the ester bonds of pimeloyl-ACP esters. The protein is Pimeloyl-[acyl-carrier protein] methyl ester esterase of Aliivibrio salmonicida (strain LFI1238) (Vibrio salmonicida (strain LFI1238)).